A 368-amino-acid polypeptide reads, in one-letter code: Core-capsid bridging protein (368 aa).

2 disordered regions span residues 17–49 (EIYG…DELD) and 307–340 (GYRG…QPVL). Residues 22–31 (PKKEEQDYKP) are compositionally biased toward basic and acidic residues. Composition is skewed to basic residues over residues 32–41 (RKLKRVKKKK) and 314–337 (RPRR…RRRQ).

This sequence belongs to the adenoviridae core-capsid bridging protein family. Monomer. Homodimer. Exists in equilibrium between monomers and dimers in solution. Interacts with the histone-like nucleoprotein; this interactions bridge the virus core to the capsid. Interacts with core protein X; this interactions bridge the virus core to the capsid. Interacts with the endosome lysis protein VI; this interactions bridge the virus core to the capsid. Interacts with the peripentonal hexons. Interacts with host NPM1; this interaction might play a role in virus assembly. In terms of processing, during virion entry, is ubiquitinated at the nuclear pore complex by host MIB1. This dissociates viral genomic DNA from capsid and allows genome delivery into nucleus for infection.

Its subcellular location is the virion. It localises to the host nucleus. The protein localises to the host nucleolus. Its function is as follows. Associates loosely with the viral DNA to form an outer shell around the nucleoprotein-DNA complex and links it with the capsid by binding the endosome lysis protein. During entry, secures the viral genome in the capsid until it reaches the nuclear pore complex, preventing innate immunity responses. Dissociates from the viral genome at nuclear pore. Might be involved in nuclear capsid assembly of the viral particles through its association with NPM1/nucleophosmin. This Human adenovirus C serotype 5 (HAdV-5) protein is Core-capsid bridging protein.